We begin with the raw amino-acid sequence, 1647 residues long: Probable ubiquitin fusion degradation protein C12B10.01c (1647 aa).

Residues 192 to 209 are compositionally biased toward polar residues; the sequence is TYSDSSNYHTSTDSSQYN. Disordered stretches follow at residues 192-288 and 1039-1076; these read TYSD…PSAA and ESMSGSSRNSSGDYTDSMSQDAPNHTTEPSERRDSSTS. 2 stretches are compositionally biased toward acidic residues: residues 218–228 and 245–273; these read DTNDGTDDDIN and ERDEDVDEEEEEDDDENNDEGDDEDENEN. Low complexity predominate over residues 1039 to 1050; it reads ESMSGSSRNSSG. Over residues 1051–1065 the composition is skewed to polar residues; sequence DYTDSMSQDAPNHTT. Residues 1066–1076 are compositionally biased toward basic and acidic residues; the sequence is EPSERRDSSTS. The interval 1183–1257 is K-box; the sequence is IENILTDFSN…SVSFLLSRNP (75 aa). In terms of domain architecture, HECT spans 1294-1647; that stretch reads ATYAASENIL…LEGQGSFHLS (354 aa). Cys1614 acts as the Glycyl thioester intermediate in catalysis.

This sequence belongs to the UPL family. K-HECT subfamily.

It carries out the reaction S-ubiquitinyl-[E2 ubiquitin-conjugating enzyme]-L-cysteine + [acceptor protein]-L-lysine = [E2 ubiquitin-conjugating enzyme]-L-cysteine + N(6)-ubiquitinyl-[acceptor protein]-L-lysine.. E3 ubiquitin-protein ligase which accepts ubiquitin from an E2 ubiquitin-conjugating enzyme in the form of a thioester and then directly transfers the ubiquitin to targeted substrates. The sequence is that of Probable ubiquitin fusion degradation protein C12B10.01c from Schizosaccharomyces pombe (strain 972 / ATCC 24843) (Fission yeast).